A 308-amino-acid polypeptide reads, in one-letter code: Regulating synaptic membrane exocytosis protein 3 (308 aa).

Residues 86-120 are disordered; that stretch reads STETGIAVEMRSRVTRQGSRESTDGSTNSNSSDGT. A compositionally biased stretch (low complexity) spans 109–120; it reads DGSTNSNSSDGT. In terms of domain architecture, C2 spans 156-274; sequence PMGDVHIAIM…DLSAAVTGWY (119 aa). Ser295 and Ser298 each carry phosphoserine.

Binds PPFIA3. Does not bind RAB3.

It localises to the synapse. Its function is as follows. Regulates synaptic membrane exocytosis. The protein is Regulating synaptic membrane exocytosis protein 3 (RIMS3) of Homo sapiens (Human).